The primary structure comprises 623 residues: Bifunctional enzyme CysN/CysC (623 aa).

Residues 1–450 (MQSVIAYLKQ…HVARARIKGQ (450 aa)) are sulfate adenylyltransferase. Residues 14 to 228 (KPLLRFITCG…YLEALEPADV (215 aa)) enclose the tr-type G domain. The tract at residues 23-30 (GSVDDGKS) is G1. 23–30 (GSVDDGKS) serves as a coordination point for GTP. Residues 81–85 (GITID) are G2. The tract at residues 102–105 (DCPG) is G3. GTP contacts are provided by residues 102–106 (DCPGH) and 157–160 (NKMD). Residues 157–160 (NKMD) are G4. The interval 194-196 (SAL) is G5. The interval 451–623 (TPKVLWFTGL…VLSLLGVEGK (173 aa)) is adenylyl-sulfate kinase. 459-466 (GLSGAGKS) lines the ATP pocket. The active-site Phosphoserine intermediate is Ser533.

This sequence in the C-terminal section; belongs to the APS kinase family. In the N-terminal section; belongs to the TRAFAC class translation factor GTPase superfamily. Classic translation factor GTPase family. CysN/NodQ subfamily. As to quaternary structure, heterodimer composed of CysD, the smaller subunit, and CysNC.

The enzyme catalyses sulfate + ATP + H(+) = adenosine 5'-phosphosulfate + diphosphate. It catalyses the reaction adenosine 5'-phosphosulfate + ATP = 3'-phosphoadenylyl sulfate + ADP + H(+). Its pathway is sulfur metabolism; hydrogen sulfide biosynthesis; sulfite from sulfate: step 1/3. The protein operates within sulfur metabolism; hydrogen sulfide biosynthesis; sulfite from sulfate: step 2/3. In terms of biological role, with CysD forms the ATP sulfurylase (ATPS) that catalyzes the adenylation of sulfate producing adenosine 5'-phosphosulfate (APS) and diphosphate, the first enzymatic step in sulfur assimilation pathway. APS synthesis involves the formation of a high-energy phosphoric-sulfuric acid anhydride bond driven by GTP hydrolysis by CysN coupled to ATP hydrolysis by CysD. APS kinase catalyzes the synthesis of activated sulfate. This Xylella fastidiosa (strain Temecula1 / ATCC 700964) protein is Bifunctional enzyme CysN/CysC (cysNC).